Consider the following 208-residue polypeptide: Large ribosomal subunit protein uL3 (208 aa).

The disordered stretch occupies residues 116 to 148 (GFQGVIKRHGQSRGPMAHGSRYHRRPGSMGPVA).

Belongs to the universal ribosomal protein uL3 family. In terms of assembly, part of the 50S ribosomal subunit. Forms a cluster with proteins L14 and L19.

Functionally, one of the primary rRNA binding proteins, it binds directly near the 3'-end of the 23S rRNA, where it nucleates assembly of the 50S subunit. This is Large ribosomal subunit protein uL3 from Streptococcus pyogenes serotype M6 (strain ATCC BAA-946 / MGAS10394).